Reading from the N-terminus, the 291-residue chain is Phosphate import ATP-binding protein PstB (291 aa).

In terms of domain architecture, ABC transporter spans 45–286 (YSTQNLDLWY…PADKQTEDYI (242 aa)). 77 to 84 (GPSGCGKS) lines the ATP pocket.

It belongs to the ABC transporter superfamily. Phosphate importer (TC 3.A.1.7) family. The complex is composed of two ATP-binding proteins (PstB), two transmembrane proteins (PstC and PstA) and a solute-binding protein (PstS).

It is found in the cell membrane. It carries out the reaction phosphate(out) + ATP + H2O = ADP + 2 phosphate(in) + H(+). Functionally, part of the ABC transporter complex PstSACB involved in phosphate import. Responsible for energy coupling to the transport system. The protein is Phosphate import ATP-binding protein PstB of Staphylococcus epidermidis (strain ATCC 35984 / DSM 28319 / BCRC 17069 / CCUG 31568 / BM 3577 / RP62A).